The chain runs to 407 residues: Arginine deiminase (407 aa).

The Amidino-cysteine intermediate role is filled by C397.

This sequence belongs to the arginine deiminase family.

The protein resides in the cytoplasm. The enzyme catalyses L-arginine + H2O = L-citrulline + NH4(+). The protein operates within amino-acid degradation; L-arginine degradation via ADI pathway; carbamoyl phosphate from L-arginine: step 1/2. The polypeptide is Arginine deiminase (Pediococcus pentosaceus (strain ATCC 25745 / CCUG 21536 / LMG 10740 / 183-1w)).